A 106-amino-acid chain; its full sequence is Putative membrane protein insertion efficiency factor (106 aa).

It belongs to the UPF0161 family.

It is found in the cell inner membrane. Its function is as follows. Could be involved in insertion of integral membrane proteins into the membrane. The chain is Putative membrane protein insertion efficiency factor from Acinetobacter baylyi (strain ATCC 33305 / BD413 / ADP1).